A 400-amino-acid chain; its full sequence is MVRIGTPLTDVATRAMLLGSGELGKEVAIELQRFGVEVIAVDRYSNAPAMQVAHRAHVIDMLDPKQLRALIELERPDFIIPEIEAIATAELLELERSGFNVVPSARAANLTMNREGIRRLAAEELGLSTSPYAFAADFESFRDAVSSIGVPCVVKPIMSSSGKGQSVIHSDGDVERAWRYAQEGGRAGQGKVIVEGFVDFDYEVTLLTLRHAGGTSFCDPIGHLQVDGDYRVSWQPHPMSAIALGAAQDIAEKVTVALGGCGIFGVELFVKGDEVYFSEVSPRPHDTGLVTLVSQNLSEFALHARALLGLPVPLIKQTGASASVALLVEGDSSRVCFSSLEAALCHPEVQLRLFGKPEVHGKRRMGVVLAQSENLDEARKLAQKAVDSIVVELGPDIKQE.

Residues 22 to 23 (EL) and E82 each bind N(1)-(5-phospho-beta-D-ribosyl)glycinamide. ATP contacts are provided by residues R114, K155, 160-165 (SSGKGQ), 195-198 (EGFV), and E203. The region spanning 119–308 (RLAAEELGLS…EFALHARALL (190 aa)) is the ATP-grasp domain. Mg(2+) is bound by residues E267 and E279. N(1)-(5-phospho-beta-D-ribosyl)glycinamide is bound by residues D286, K356, and 363–364 (RR).

Belongs to the PurK/PurT family. Homodimer.

It catalyses the reaction N(1)-(5-phospho-beta-D-ribosyl)glycinamide + formate + ATP = N(2)-formyl-N(1)-(5-phospho-beta-D-ribosyl)glycinamide + ADP + phosphate + H(+). The protein operates within purine metabolism; IMP biosynthesis via de novo pathway; N(2)-formyl-N(1)-(5-phospho-D-ribosyl)glycinamide from N(1)-(5-phospho-D-ribosyl)glycinamide (formate route): step 1/1. Functionally, involved in the de novo purine biosynthesis. Catalyzes the transfer of formate to 5-phospho-ribosyl-glycinamide (GAR), producing 5-phospho-ribosyl-N-formylglycinamide (FGAR). Formate is provided by PurU via hydrolysis of 10-formyl-tetrahydrofolate. The polypeptide is Formate-dependent phosphoribosylglycinamide formyltransferase (Hahella chejuensis (strain KCTC 2396)).